Consider the following 357-residue polypeptide: Serine proteinase inhibitor 1 (357 aa).

This sequence belongs to the serpin family. Poxviruses subfamily.

It is found in the host cytoplasm. This viral protein may be involved in the regulation of the complement cascade. Involved in red pock formation. In Oryctolagus cuniculus (Rabbit), this protein is Serine proteinase inhibitor 1 (SPI-1).